The following is a 1230-amino-acid chain: MSSEDELGSIGTVFPGSPIDKSIGSILPQFDEEVETLLEDSFTWNIPDWNELTNPKYNSPRFRIGDFEWDILLFPQGNHNKGVAVYLEPHPEEKLDETTGEMVPVDPDWYCCAQFAIGISRPGNGDTINLINKSHHRFNALDTDWGFANLIDLNNLKHPSKGRPLSFLNEGTLNITAYVRILKDPTGVLWHNFLNYDSKKVTGYVGFRNQGATCYLNSLLQSYFFTKYFRKLVYEIPTEHESPNNSVPLALQRAFYQLQVSDIPLDTLELTRSFGWDTAESFTQHDVQELNRILMDRLENNMKGTPVEGKLNEIFVGKMKSYIKCINVDYESARVEDFWDLQLNVKNFKNLQESFDNYIEMELMNGENQYAAQDYGLQDAQKGVIFESFPPVLHLQLKRFEYDFNYDQMVKVNDKYEFPETIDLSPFVDKDVLKKTLDSENKDKNPYVYNLHGVLVHSGDISTGHYYTLIKPGVEDQWYRFDDERVWRVTKKQVFQENFGCDRLPDEKVRTMTRGEYQNYIIQRHTSAYMLVYIRQEQEEDLLRPVLESDVPKHVITRVREEIKERETKEKEIREAHLYVTLRLHSIKEFIHYEGFDYFAHDGFRLFAEELNDSGLQQINLKVLRTTKLSDIFASIKETMNIPQERDVKYWKMDYRRNSTLRLTQPINFESVNITLQEALKKEKKRTMQTQYGEEGVASTEEDDKALLETVSFLDLFIEEPYLELQFLNKLKEASLISKAQLDDELISTIRTNLPELTKGGIEPVFATDNKSNLLFVKSYDPHTQKLLGFGHFAVNQLQQLSDISAIIEDSISSNEKLTFYEEVQPGTINEIYMKETIYDADIDTGDIVSFEVPGAVLPDTFPVYATIKDFYSYLRYRVKLKFSKFDGSSEEYGVSNEIPESFEFWISAYAPYDDLARMVSKYAHVKPEYLKIIALYSNGRFVLKSTSLLNDYLLKDFNCDQIPPFAFEVLSVPLKELERLRPIKLYWLKNSYIHYQCFEFEVANDYTESQFLEKVQHKIGFTDEEKENILLWTNTNFQFQGLLSDQNTFKDVSKHSLLFGRILPEESKLFKELNRLENVQTSSLEDFMDDENATDRPMDDEQDLGMAIEHSEDMKGRIVVVQQYFKDLENRHGISFLFNLIPDETFPKTKDRLHAKFGLGQKEFSKIKLSIGYSTEEGTVFRSLQGFSDEELDKVILYDIMSNLDYIYMDHPDRLRSHSSYDRPMIIKN.

In terms of domain architecture, MATH spans 39–179; the sequence is EDSFTWNIPD…EGTLNITAYV (141 aa). The 332-residue stretch at 205-536 folds into the USP domain; sequence VGFRNQGATC…SAYMLVYIRQ (332 aa). C214 acts as the Nucleophile in catalysis. Residue H465 is the Proton acceptor of the active site.

The protein belongs to the peptidase C19 family. In terms of assembly, interacts with PEX6; promoting association with the PEX1-PEX6 ATPase complex.

The protein resides in the cytoplasm. It is found in the cytosol. Its subcellular location is the peroxisome. The catalysed reaction is Thiol-dependent hydrolysis of ester, thioester, amide, peptide and isopeptide bonds formed by the C-terminal Gly of ubiquitin (a 76-residue protein attached to proteins as an intracellular targeting signal).. Deubiquitinase involved in peroxisome import by mediating deubiquitination of the peroxisomal import receptor PEX5. Catalyzes deubiquitination of both monoubiquitiated and polyubiquitinated forms of PEX5 following its retrotranslocation into the cytosol, resetting PEX5 for a subsequent import cycle. In Saccharomyces cerevisiae (strain ATCC 204508 / S288c) (Baker's yeast), this protein is Ubiquitin carboxyl-terminal hydrolase 15.